The chain runs to 401 residues: Dual-specificity RNA methyltransferase RlmN (401 aa).

Glu114 serves as the catalytic Proton acceptor. In terms of domain architecture, Radical SAM core spans 120–365 (DKGRGTLCVS…TMVRRTRGDD (246 aa)). Residues Cys127 and Cys370 are joined by a disulfide bond. [4Fe-4S] cluster-binding residues include Cys134, Cys138, and Cys141. S-adenosyl-L-methionine is bound by residues 187–188 (GE), Ser219, 241–243 (SLH), and Asn327. The S-methylcysteine intermediate role is filled by Cys370.

Belongs to the radical SAM superfamily. RlmN family. [4Fe-4S] cluster is required as a cofactor.

The protein localises to the cytoplasm. It catalyses the reaction adenosine(2503) in 23S rRNA + 2 reduced [2Fe-2S]-[ferredoxin] + 2 S-adenosyl-L-methionine = 2-methyladenosine(2503) in 23S rRNA + 5'-deoxyadenosine + L-methionine + 2 oxidized [2Fe-2S]-[ferredoxin] + S-adenosyl-L-homocysteine. It carries out the reaction adenosine(37) in tRNA + 2 reduced [2Fe-2S]-[ferredoxin] + 2 S-adenosyl-L-methionine = 2-methyladenosine(37) in tRNA + 5'-deoxyadenosine + L-methionine + 2 oxidized [2Fe-2S]-[ferredoxin] + S-adenosyl-L-homocysteine. Specifically methylates position 2 of adenine 2503 in 23S rRNA and position 2 of adenine 37 in tRNAs. m2A2503 modification seems to play a crucial role in the proofreading step occurring at the peptidyl transferase center and thus would serve to optimize ribosomal fidelity. The protein is Dual-specificity RNA methyltransferase RlmN of Xanthomonas axonopodis pv. citri (strain 306).